A 597-amino-acid polypeptide reads, in one-letter code: Polyphenol oxidase latent form, chloroplastic (597 aa).

Residues 1–49 constitute a chloroplast transit peptide; that stretch reads MATAPSPTTMGTYSSLISTNSFSTFLPNKSQLSLSGKSKHYVARRSSIS. Residues 49–70 are disordered; it reads SCKATNNNNSNNQNEQQEESSR. The transit peptide at 50-101 directs the protein to the thylakoid; sequence CKATNNNNSNNQNEQQEESSRLLGKLDRRNILIGLGGLYGATTLDRKPFAFA. Low complexity predominate over residues 54 to 63; it reads NNNNSNNQNE. Disulfide bonds link C112–C128 and C127–C189. H188, H209, H218, H341, H345, and H375 together coordinate Cu cation. The 2'-(S-cysteinyl)-histidine (Cys-His) cross-link spans 192–209; that stretch reads CNGAYPQVGFTDNDIQVH.

Belongs to the tyrosinase family. In terms of assembly, monomer. It depends on Cu(2+) as a cofactor. Expressed in immature-green fruit.

The protein resides in the plastid. The protein localises to the chloroplast thylakoid lumen. The catalysed reaction is 2 catechol + O2 = 2 1,2-benzoquinone + 2 H2O. Its activity is regulated as follows. Activated in the presence of substrate at low pH. Specific activity fluctuates during fruit ripening, starting at immature-green stage, reaching a peak at the breaker stage, followed by a sharp decrease until the half-ripe stage to remain stable during the following development stages. Triggered by CuSO(4) and by low concentrations of SDS. Repressed by several inhibitors including 4-hexylresorcinol, ascorbic acid, benzoic acid, kojic acid, glutathione (reduced form), L-cysteine and sodium metabisulfite. Inhibited by various salt such as FeSO(4), KCl, NaCl, CaCl(2), MnCl(2), NiCl(2) and AlCl(3). Spontaneously activated during storage at 4 degrees Celsius. Functionally, catalyzes the oxidation of mono- and o-diphenols to o-diquinones. Uses preferentially 4-methylcatechol and chlorogenic acid as substrates, followed by caffeic acid, pyrogallol, and catechol, but barely active toward dopamine and L-dopa. No activity detected with monophenols (e.g. phenol and tyramine). The chain is Polyphenol oxidase latent form, chloroplastic from Prunus armeniaca (Apricot).